The sequence spans 507 residues: ATP synthase subunit alpha, chloroplastic (507 aa).

170-177 (GDRQTGKT) contacts ATP.

The protein belongs to the ATPase alpha/beta chains family. In terms of assembly, F-type ATPases have 2 components, CF(1) - the catalytic core - and CF(0) - the membrane proton channel. CF(1) has five subunits: alpha(3), beta(3), gamma(1), delta(1), epsilon(1). CF(0) has four main subunits: a, b, b' and c.

It localises to the plastid. The protein resides in the chloroplast thylakoid membrane. The catalysed reaction is ATP + H2O + 4 H(+)(in) = ADP + phosphate + 5 H(+)(out). Functionally, produces ATP from ADP in the presence of a proton gradient across the membrane. The alpha chain is a regulatory subunit. This chain is ATP synthase subunit alpha, chloroplastic, found in Cycas taitungensis (Prince sago).